A 140-amino-acid polypeptide reads, in one-letter code: Large-conductance mechanosensitive channel (140 aa).

Helical transmembrane passes span 16-36 (VVDL…VDSI) and 86-106 (GSFL…FLMV).

It belongs to the MscL family. As to quaternary structure, homopentamer.

Its subcellular location is the cell inner membrane. In terms of biological role, channel that opens in response to stretch forces in the membrane lipid bilayer. May participate in the regulation of osmotic pressure changes within the cell. This chain is Large-conductance mechanosensitive channel, found in Anaeromyxobacter sp. (strain K).